A 1380-amino-acid polypeptide reads, in one-letter code: Carboxypeptidase D (1380 aa).

Positions 1–31 are cleaved as a signal peptide; it reads MASGRDERPPWRLGRLLLLMCLLLLGSSARA. Residues 32 to 1299 are Extracellular-facing; it reads AHIKKAEATT…DNRIFGLPRE (1268 aa). Positions 57–380 constitute a Peptidase M14 1 domain; sequence RYYHEEELES…ESLITLIEKV (324 aa). Zn(2+)-binding residues include His139 and Glu142. A Cell attachment site motif is present at residues 162-164; that stretch reads RGD. Asn172 is a glycosylation site (N-linked (GlcNAc...) asparagine). A disordered region spans residues 190 to 232; that stretch reads AREGDCGFGDGGPSGASGRDNSRGRDLNRSFPDQFSTGEPPAL. The segment covering 195-204 has biased composition (gly residues); it reads CGFGDGGPSG. Asn217 carries an N-linked (GlcNAc...) asparagine glycan. His257 is a Zn(2+) binding site. Residue Tyr265 is modified to Phosphotyrosine. Ser270 is modified (phosphoserine). The Proton donor/acceptor role is filled by Glu350. Residues Asn399, Asn410, Asn429, and Asn522 are each glycosylated (N-linked (GlcNAc...) asparagine). Positions 502–792 constitute a Peptidase M14 2 domain; it reads HHHHFPDMEI…RSLIQFMKQV (291 aa). 2 residues coordinate Zn(2+): His564 and Glu567. Residue Asn626 is glycosylated (N-linked (GlcNAc...) asparagine). His671 serves as a coordination point for Zn(2+). The active-site Proton donor/acceptor is the Glu762. Residues Asn811, Asn855, Asn867, and Asn879 are each glycosylated (N-linked (GlcNAc...) asparagine). The disordered stretch occupies residues 874 to 899; that stretch reads STDSNNESKKGKGASSSTNDASDPTT. Over residues 887–897 the composition is skewed to polar residues; it reads ASSSTNDASDP. Residues 932 to 1211 form the Peptidase M14 3 domain; sequence RYHSYKDLSE…RSLLSMLVEV (280 aa). N-linked (GlcNAc...) asparagine glycosylation is found at Asn955, Asn978, Asn1070, and Asn1142. A helical membrane pass occupies residues 1300-1320; that stretch reads LVVTVSGATMSALILTACIIW. 3 S-palmitoyl cysteine lipidation sites follow: Cys1317, Cys1321, and Cys1323. The Cytoplasmic portion of the chain corresponds to 1321–1380; sequence CICSIKSNRHKDGFHRLRQHHDEYEDEIRMMSTGSKKSLLSHEFQDETDTEEETLYSSKH. Phosphoserine is present on residues Ser1358 and Ser1361. The disordered stretch occupies residues 1359-1380; that stretch reads LLSHEFQDETDTEEETLYSSKH. Phosphothreonine occurs at positions 1368 and 1370.

This sequence belongs to the peptidase M14 family. The cofactor is Zn(2+). Highly expressed in placenta, pancreas and hepatoma cells. Lower levels found in skeletal muscle, heart and colon carcinoma and melanoma cell lines.

The protein localises to the cell membrane. It carries out the reaction Releases C-terminal Arg and Lys from polypeptides.. The sequence is that of Carboxypeptidase D (CPD) from Homo sapiens (Human).